Here is a 268-residue protein sequence, read N- to C-terminus: Endonuclease 8 1 (268 aa).

The Schiff-base intermediate with DNA role is filled by Pro2. The Proton donor role is filled by Glu3. Lys52 functions as the Proton donor; for beta-elimination activity in the catalytic mechanism. Arg125 and Asn166 together coordinate DNA. The FPG-type zinc finger occupies 234–268; that stretch reads YVYRRAGEPCRVCGGVIRTALLEGRNVFWCPVCQT. The Proton donor; for delta-elimination activity role is filled by Arg258.

Belongs to the FPG family. Requires Zn(2+) as cofactor.

It catalyses the reaction 2'-deoxyribonucleotide-(2'-deoxyribose 5'-phosphate)-2'-deoxyribonucleotide-DNA = a 3'-end 2'-deoxyribonucleotide-(2,3-dehydro-2,3-deoxyribose 5'-phosphate)-DNA + a 5'-end 5'-phospho-2'-deoxyribonucleoside-DNA + H(+). Its function is as follows. Involved in base excision repair of DNA damaged by oxidation or by mutagenic agents. Acts as a DNA glycosylase that recognizes and removes damaged bases. Has AP (apurinic/apyrimidinic) lyase activity and introduces nicks in the DNA strand. Cleaves the DNA backbone by beta-delta elimination to generate a single-strand break at the site of the removed base with both 3'- and 5'-phosphates. In Mycobacterium bovis (strain ATCC BAA-935 / AF2122/97), this protein is Endonuclease 8 1 (nei1).